A 181-amino-acid chain; its full sequence is Large ribosomal subunit protein uL5c (181 aa).

Belongs to the universal ribosomal protein uL5 family. In terms of assembly, part of the 50S ribosomal subunit; contacts the 5S rRNA.

It is found in the plastid. Its function is as follows. Binds 5S rRNA, forms part of the central protuberance of the 50S subunit. The polypeptide is Large ribosomal subunit protein uL5c (rpl5) (Helicosporidium sp. subsp. Simulium jonesii (Green alga)).